A 323-amino-acid polypeptide reads, in one-letter code: Cyclin-D5-1 (323 aa).

2 disordered regions span residues 17 to 36 (ESSLNEDDDETIERSDKQEP) and 281 to 323 (HMTP…MRRL).

The protein belongs to the cyclin family. Cyclin D subfamily.

In Arabidopsis thaliana (Mouse-ear cress), this protein is Cyclin-D5-1 (CYCD5-1).